The chain runs to 152 residues: Ribosome maturation factor RimP (152 aa).

This sequence belongs to the RimP family.

It localises to the cytoplasm. In terms of biological role, required for maturation of 30S ribosomal subunits. This is Ribosome maturation factor RimP from Stutzerimonas stutzeri (strain A1501) (Pseudomonas stutzeri).